The sequence spans 522 residues: tRNA-2-methylthio-N(6)-dimethylallyladenosine synthase (522 aa).

Residues 1–26 are compositionally biased toward low complexity; sequence MSLTIPSPASGTSTSATTDTAPAAAP. Positions 1–27 are disordered; it reads MSLTIPSPASGTSTSATTDTAPAAAPQ. One can recognise an MTTase N-terminal domain in the interval 28-143; it reads RTYQVRTFGC…LPALLDRARH (116 aa). Residues cysteine 37, cysteine 72, cysteine 106, cysteine 180, cysteine 184, and cysteine 187 each coordinate [4Fe-4S] cluster. The Radical SAM core domain maps to 166–396; the sequence is RDSVYSGWVS…TALQDRIAAE (231 aa). One can recognise a TRAM domain in the interval 399-469; sequence ARQLGRRVEV…AFHLVADPAS (71 aa). A disordered region spans residues 481–522; sequence GDAWDRSQADSCGAPVAGGGAGSNGGKGGVSLGMPALPVRRS. Gly residues predominate over residues 496–511; sequence VAGGGAGSNGGKGGVS.

It belongs to the methylthiotransferase family. MiaB subfamily. Monomer. [4Fe-4S] cluster is required as a cofactor.

It localises to the cytoplasm. The catalysed reaction is N(6)-dimethylallyladenosine(37) in tRNA + (sulfur carrier)-SH + AH2 + 2 S-adenosyl-L-methionine = 2-methylsulfanyl-N(6)-dimethylallyladenosine(37) in tRNA + (sulfur carrier)-H + 5'-deoxyadenosine + L-methionine + A + S-adenosyl-L-homocysteine + 2 H(+). Catalyzes the methylthiolation of N6-(dimethylallyl)adenosine (i(6)A), leading to the formation of 2-methylthio-N6-(dimethylallyl)adenosine (ms(2)i(6)A) at position 37 in tRNAs that read codons beginning with uridine. The protein is tRNA-2-methylthio-N(6)-dimethylallyladenosine synthase of Arthrobacter sp. (strain FB24).